A 362-amino-acid polypeptide reads, in one-letter code: Chorismate synthase (362 aa).

A disordered region spans residues 39 to 59 (ADLQGDLDRRKPGTSRYTTPR). Residues Arg48 and Arg54 each contribute to the NADP(+) site. FMN-binding positions include 125–127 (RSS), 238–239 (NA), Gly278, 293–297 (KPTSS), and Arg319.

The protein belongs to the chorismate synthase family. In terms of assembly, homotetramer. FMNH2 serves as cofactor.

It catalyses the reaction 5-O-(1-carboxyvinyl)-3-phosphoshikimate = chorismate + phosphate. The protein operates within metabolic intermediate biosynthesis; chorismate biosynthesis; chorismate from D-erythrose 4-phosphate and phosphoenolpyruvate: step 7/7. Functionally, catalyzes the anti-1,4-elimination of the C-3 phosphate and the C-6 proR hydrogen from 5-enolpyruvylshikimate-3-phosphate (EPSP) to yield chorismate, which is the branch point compound that serves as the starting substrate for the three terminal pathways of aromatic amino acid biosynthesis. This reaction introduces a second double bond into the aromatic ring system. In Aeromonas hydrophila subsp. hydrophila (strain ATCC 7966 / DSM 30187 / BCRC 13018 / CCUG 14551 / JCM 1027 / KCTC 2358 / NCIMB 9240 / NCTC 8049), this protein is Chorismate synthase.